The chain runs to 92 residues: UPF0235 protein PF1765 (92 aa).

It belongs to the UPF0235 family.

This is UPF0235 protein PF1765 from Pyrococcus furiosus (strain ATCC 43587 / DSM 3638 / JCM 8422 / Vc1).